A 159-amino-acid chain; its full sequence is NADH-quinone oxidoreductase subunit B (159 aa).

Cysteine 37, cysteine 38, cysteine 102, and cysteine 132 together coordinate [4Fe-4S] cluster.

The protein belongs to the complex I 20 kDa subunit family. NDH-1 is composed of 14 different subunits. Subunits NuoB, C, D, E, F, and G constitute the peripheral sector of the complex. The cofactor is [4Fe-4S] cluster.

It is found in the cell inner membrane. It catalyses the reaction a quinone + NADH + 5 H(+)(in) = a quinol + NAD(+) + 4 H(+)(out). NDH-1 shuttles electrons from NADH, via FMN and iron-sulfur (Fe-S) centers, to quinones in the respiratory chain. Couples the redox reaction to proton translocation (for every two electrons transferred, four hydrogen ions are translocated across the cytoplasmic membrane), and thus conserves the redox energy in a proton gradient. In Paraburkholderia phymatum (strain DSM 17167 / CIP 108236 / LMG 21445 / STM815) (Burkholderia phymatum), this protein is NADH-quinone oxidoreductase subunit B.